The following is a 72-amino-acid chain: Conotoxin VnMKLT2-0221 (72 aa).

Residues 1-22 (MKLTCVLIVAVLFLTACQLTTA) form the signal peptide. A propeptide spanning residues 23 to 45 (ASYARSERQHPDLGSSDQNSKLT) is cleaved from the precursor. The interval 26-45 (ARSERQHPDLGSSDQNSKLT) is disordered. Disulfide bonds link Cys48/Cys62, Cys55/Cys66, and Cys61/Cys71.

The protein belongs to the conotoxin O1 superfamily. In terms of tissue distribution, expressed by the venom duct.

It is found in the secreted. In Conus ventricosus (Mediterranean cone), this protein is Conotoxin VnMKLT2-0221.